Here is a 221-residue protein sequence, read N- to C-terminus: Translation initiation factor 6 (221 aa).

This sequence belongs to the eIF-6 family.

Functionally, binds to the 50S ribosomal subunit and prevents its association with the 30S ribosomal subunit to form the 70S initiation complex. The chain is Translation initiation factor 6 from Natronomonas pharaonis (strain ATCC 35678 / DSM 2160 / CIP 103997 / JCM 8858 / NBRC 14720 / NCIMB 2260 / Gabara) (Halobacterium pharaonis).